A 166-amino-acid polypeptide reads, in one-letter code: Regulatory protein RecX (166 aa).

This sequence belongs to the RecX family.

It is found in the cytoplasm. Functionally, modulates RecA activity. The chain is Regulatory protein RecX from Escherichia coli (strain K12 / MC4100 / BW2952).